The chain runs to 366 residues: NADH-quinone oxidoreductase subunit D (366 aa).

The protein belongs to the complex I 49 kDa subunit family. In terms of assembly, NDH-1 is composed of 14 different subunits. Subunits NuoB, C, D, E, F, and G constitute the peripheral sector of the complex.

It is found in the cell membrane. The catalysed reaction is a quinone + NADH + 5 H(+)(in) = a quinol + NAD(+) + 4 H(+)(out). In terms of biological role, NDH-1 shuttles electrons from NADH, via FMN and iron-sulfur (Fe-S) centers, to quinones in the respiratory chain. The immediate electron acceptor for the enzyme in this species is believed to be a menaquinone. Couples the redox reaction to proton translocation (for every two electrons transferred, four hydrogen ions are translocated across the cytoplasmic membrane), and thus conserves the redox energy in a proton gradient. In Bacillus thuringiensis subsp. konkukian (strain 97-27), this protein is NADH-quinone oxidoreductase subunit D.